Reading from the N-terminus, the 331-residue chain is Lactamase-like protein nscB (331 aa).

The Zn(2+) site is built by His-106, His-108, Asp-110, and His-111. The active-site Proton donor/acceptor is the Asp-110.

It belongs to the metallo-beta-lactamase superfamily. The cofactor is Zn(2+).

Its pathway is secondary metabolite biosynthesis. Lactamase-like protein; part of the gene cluster that mediates the biosynthesis of neosartoricin B, a prenylated anthracenone that probably exhibits T-cell antiproliferative activity, suggestive of a physiological role as an immunosuppressive agent. The non-reducing polyketide synthase nscA probably synthesizes and cyclizes the decaketide backbone. The hydrolase nscB then mediates the product release through hydrolysis followed by spontaneous decarboxylation. The prenyltransferase nscD catalyzes the addition of the dimethylallyl group to the aromatic C5. The FAD-dependent monooxygenase nscC is then responsible for the stereospecific hydroxylation at C2. Neosartoricin B can be converted into two additional compounds neosartoricins C and D. Neosartoricin C is a spirocyclic compound that is cyclized through the attack of C3 hydroxyl on C14, followed by dehydration. On the other hand, neosartoricin D is a further cyclized compound in which attack of C2 on C14 in neosartoricin C results in the formation of the acetal-containing dioxabicyclo-octanone ring. Both of these compounds are novel and possibly represent related metabolites of the gene cluster. This chain is Lactamase-like protein nscB, found in Trichophyton equinum (strain ATCC MYA-4606 / CBS 127.97) (Horse ringworm fungus).